Here is a 231-residue protein sequence, read N- to C-terminus: Elongation factor 1-delta 2 (231 aa).

Ala2 is modified (N-acetylalanine). The GST C-terminal domain maps to 11-73 (SGLKKLDEHL…LRISGVSAEG (63 aa)). The tract at residues 82–136 (SPITEEAVATPPAADSKDTAAEEEDDDDVDLFGEETEEEKKAAEERAASVKASTK) is disordered. Acidic residues predominate over residues 102-118 (AEEEDDDDVDLFGEETE). Residues 119-129 (EEKKAAEERAA) show a composition bias toward basic and acidic residues.

This sequence belongs to the EF-1-beta/EF-1-delta family. In terms of assembly, EF-1 is composed of 4 subunits: alpha, beta (1B-alpha=beta'), delta (1B-beta), and gamma (1B-gamma).

Its function is as follows. EF-1-beta and EF-1-delta stimulate the exchange of GDP bound to EF-1-alpha to GTP. The chain is Elongation factor 1-delta 2 from Arabidopsis thaliana (Mouse-ear cress).